We begin with the raw amino-acid sequence, 483 residues long: Teichuronic acid biosynthesis protein TuaB (483 aa).

11 consecutive transmembrane segments (helical) span residues 15–34 (TSIS…ALLG), 41–63 (EFGL…DMGF), 83–105 (WLNI…VIAG), 112–134 (LVFL…QYQY), 154–176 (VLSF…YVIS), 294–316 (LALV…ITAV), 321–343 (WLAA…LMNP), 356–378 (LAFY…AVQT), 382–404 (LTVA…WLLA), 411–433 (LSAY…IIAF), and 448–470 (MRLA…KAYP).

Belongs to the polysaccharide synthase family.

It is found in the cell membrane. The protein operates within cell wall biogenesis; teichuronic acid biosynthesis. Its function is as follows. Might be involved in the translocation of teichuronic acid repeating units from the inner to the outer surface of the membrane. The sequence is that of Teichuronic acid biosynthesis protein TuaB (tuaB) from Bacillus subtilis (strain 168).